A 96-amino-acid polypeptide reads, in one-letter code: Large ribosomal subunit protein bL27 (96 aa).

The propeptide occupies 1-10; that stretch reads MLLKLNIQLF.

The protein belongs to the bacterial ribosomal protein bL27 family. The N-terminus is cleaved by ribosomal processing cysteine protease Prp.

The polypeptide is Large ribosomal subunit protein bL27 (Phytoplasma mali (strain AT)).